We begin with the raw amino-acid sequence, 184 residues long: NADH-quinone oxidoreductase subunit B (184 aa).

Residues Cys37, Cys38, Cys103, and Cys132 each coordinate [4Fe-4S] cluster.

Belongs to the complex I 20 kDa subunit family. NDH-1 is composed of 14 different subunits. Subunits NuoB, C, D, E, F, and G constitute the peripheral sector of the complex. [4Fe-4S] cluster serves as cofactor.

It is found in the cell membrane. It catalyses the reaction a quinone + NADH + 5 H(+)(in) = a quinol + NAD(+) + 4 H(+)(out). NDH-1 shuttles electrons from NADH, via FMN and iron-sulfur (Fe-S) centers, to quinones in the respiratory chain. The immediate electron acceptor for the enzyme in this species is believed to be a menaquinone. Couples the redox reaction to proton translocation (for every two electrons transferred, four hydrogen ions are translocated across the cytoplasmic membrane), and thus conserves the redox energy in a proton gradient. The polypeptide is NADH-quinone oxidoreductase subunit B (Mycolicibacterium smegmatis (strain ATCC 700084 / mc(2)155) (Mycobacterium smegmatis)).